A 154-amino-acid chain; its full sequence is UPF0178 protein Sala_2376 (154 aa).

This sequence belongs to the UPF0178 family.

The protein is UPF0178 protein Sala_2376 of Sphingopyxis alaskensis (strain DSM 13593 / LMG 18877 / RB2256) (Sphingomonas alaskensis).